A 336-amino-acid chain; its full sequence is Ultraviolet-sensitive opsin (336 aa).

Residues 1 to 29 (MDAWTYQFGNLSKISPFEGPQYHLAPKWA) are Extracellular-facing. The N-linked (GlcNAc...) asparagine glycan is linked to N10. A helical membrane pass occupies residues 30 to 54 (FYLQAAFMGFVFFVGTPLNAIVLFV). Over 55–66 (TMKYKKLRQPLN) the chain is Cytoplasmic. Residues 67 to 91 (YILVNISLGGFIFDTFSVSQVFFSA) traverse the membrane as a helical segment. The Extracellular segment spans residues 92 to 106 (LRGYYFFGYTLCAME). Cysteines 103 and 180 form a disulfide. The helical transmembrane segment at 107 to 126 (AAMGSIAGLVTGWSLAVLAF) threads the bilayer. Residues 127–145 (ERYVVICKPFGSFKFGQSQ) are Cytoplasmic-facing. The chain crosses the membrane as a helical span at residues 146–169 (ALGAVALTWIIGIGCATPPFWGWS). The Extracellular portion of the chain corresponds to 170–195 (RYIPEGIGTACGPDWYTKNEEYNTES). The chain crosses the membrane as a helical span at residues 196 to 223 (YTYFLLVSCFMMPIMIITFSYSQLLGAL). Residues 224-245 (RAVAAQQAESASTQKAEKEVSR) are Cytoplasmic-facing. The helical transmembrane segment at 246-269 (MVVVMVGSFVVCYGPYAITALYFS) threads the bilayer. The Extracellular segment spans residues 270–277 (YAEDSNKD). The chain crosses the membrane as a helical span at residues 278–302 (YRLVAIPSLFSKSSCVYNPLIYAFM). N6-(retinylidene)lysine is present on K289. Residues 303-336 (NKQFNACIMETVFGKKIDESSEVSSKTETSSVSA) are Cytoplasmic-facing.

This sequence belongs to the G-protein coupled receptor 1 family. Opsin subfamily. In terms of processing, phosphorylated on some or all of the serine and threonine residues present in the C-terminal region.

Its subcellular location is the membrane. In terms of biological role, visual pigments are the light-absorbing molecules that mediate vision. They consist of an apoprotein, opsin, covalently linked to cis-retinal. This is Ultraviolet-sensitive opsin from Carassius auratus (Goldfish).